The sequence spans 962 residues: Translation initiation factor IF-2 (962 aa).

Disordered regions lie at residues 122–263, 293–327, and 341–362; these read EVGV…EPAR, TEEVEVKEAPRKKRPRPEEFEKEAAERKAKGTRRK, and IAAQDDRGRLKGDKRRPFAKEP. The segment covering 156–173 has biased composition (low complexity); it reads AVEPQTVVPPVAAPAAEV. Over residues 188–202 the composition is skewed to basic and acidic residues; it reads KPPEEKETKVKHAEP. Positions 244-256 are enriched in basic residues; that stretch reads RPKKAKKRRRKKV. Composition is skewed to basic and acidic residues over residues 308 to 327 and 344 to 362; these read RPEEFEKEAAERKAKGTRRK and QDDRGRLKGDKRRPFAKEP. Residues 455–624 enclose the tr-type G domain; the sequence is RRPPVITVMG…LLQAELLELK (170 aa). Residues 464-471 are G1; the sequence is GHVDHGKT. GTP is bound at residue 464–471; the sequence is GHVDHGKT. The segment at 489 to 493 is G2; it reads GITQH. The G3 stretch occupies residues 510 to 513; sequence DTPG. Residues 510–514 and 564–567 each bind GTP; these read DTPGH and NKVD. The interval 564 to 567 is G4; it reads NKVD. The G5 stretch occupies residues 600–602; the sequence is SAK.

The protein belongs to the TRAFAC class translation factor GTPase superfamily. Classic translation factor GTPase family. IF-2 subfamily.

Its subcellular location is the cytoplasm. In terms of biological role, one of the essential components for the initiation of protein synthesis. Protects formylmethionyl-tRNA from spontaneous hydrolysis and promotes its binding to the 30S ribosomal subunits. Also involved in the hydrolysis of GTP during the formation of the 70S ribosomal complex. This chain is Translation initiation factor IF-2, found in Syntrophobacter fumaroxidans (strain DSM 10017 / MPOB).